Here is a 465-residue protein sequence, read N- to C-terminus: Nuclear pore complex protein NUP50B (465 aa).

Disordered regions lie at residues 1 to 44 (MGDS…TFNT) and 59 to 244 (RRTD…FHQH). Gly2 is modified (N-acetylglycine). Residues 26-35 (GLDDDDEDTS) are compositionally biased toward acidic residues. Low complexity predominate over residues 81-97 (PFTAPAPSTAAAETTKP). Basic and acidic residues-rich tracts occupy residues 105–127 (TLAD…KSDA), 141–157 (ISAK…KEMS), and 216–233 (TEKE…EKNG). The residue at position 125 (Ser125) is a Phosphoserine. 3 repeat units span residues 266–267 (FG), 286–287 (FG), and 297–298 (FG). Positions 266 to 298 (FGLVPQEGSTGSGSEQSSFSFGQANNGNSSLFG) are 3 X 2 AA repeats of F-G. 2 disordered regions span residues 308 to 330 (KSTE…GEEN) and 439 to 465 (HKDS…AEDA). Thr455 carries the phosphothreonine modification. Positions 456-465 (PENSPSAEDA) are enriched in polar residues. Ser459 bears the Phosphoserine mark.

As to quaternary structure, part of the nuclear pore complex (NPC). The NPC has an eight-fold symmetrical structure comprising a central transport channel and two rings, the cytoplasmic and nuclear rings, to which eight filaments are attached. The cytoplasmic filaments have loose ends, while the nuclear filaments are joined in a distal ring, forming a nuclear basket. NPCs are highly dynamic in configuration and composition, and can be devided in 3 subcomplexes, the NUP62 subcomplex, the NUP107-160 subcomplex and the NUP93 subcomplex, containing approximately 30 different nucleoporin proteins.

The protein resides in the nucleus. It is found in the nucleoplasm. The protein localises to the nuclear pore complex. In terms of biological role, probably involved in nucleocytoplasmic transport via its interactions with importins and Ran, rather than by forming part of the nuclear pore complex (NPC) scaffolding. The protein is Nuclear pore complex protein NUP50B of Arabidopsis thaliana (Mouse-ear cress).